Reading from the N-terminus, the 434-residue chain is MTMKRCKSCGQSLSNEDRISQLPEALLLQILSLLPTKEVVAVSVLAKRWRFLWKMVPSLEFFYYFTNDLERFSYNVSKCLFSHQAPFLQSLHLNMNFGCDPRIMDFEILIGIAFGRQLRKLVLKVYSGDWFKFPTSLYNSETLETLELYHCILIDVPFPVCLKSLRTLNLHEVEFVNDESVVNLLAGCISLENLVIHQTTDLNVKTFTIAVPSLQRLTVIVEYYEEFSVFVVNTPSLKYLKIEGIIVDDRTCIIENTPELVEASIIDVSFKVFESILGSLASVQRLSLKVSLVEIFSLPPISNTFYHLTYLELSTYKPKWWNLLTLMLDTSPNLQVLKIFDFMTSQEQRPWEKWNEPKNVPECLLLHLETFVWTCYEGKLENEIELAKYILRNARRLKKATFSIIEINPDKRVEMVGELKSVVRASNSCQLVFI.

In terms of domain architecture, F-box spans 16-65 (EDRISQLPEALLLQILSLLPTKEVVAVSVLAKRWRFLWKMVPSLEFFYYF). LRR repeat units lie at residues 69 to 95 (LERF…HLNM), 100 to 125 (DPRI…VLKV), 145 to 172 (TLEL…NLHE), 173 to 198 (VEFV…VIHQ), 219 to 244 (VIVE…KIEG), 265 to 290 (IIDV…SLKV), and 315 to 341 (TYKP…KIFD). The FBD domain maps to 353 to 403 (KWNEPKNVPECLLLHLETFVWTCYEGKLENEIELAKYILRNARRLKKATFS).

The sequence is that of F-box/FBD/LRR-repeat protein At3g26920 from Arabidopsis thaliana (Mouse-ear cress).